The primary structure comprises 174 residues: Shikimate kinase 2 (174 aa).

Residue 12-17 (GCGKTT) coordinates ATP. Positions 16 and 32 each coordinate Mg(2+). The substrate site is built by D34, R58, and G79. Positions 112–126 (QAAPEEDLRPTLTGK) are LID domain. Residue R120 participates in ATP binding. R139 lines the substrate pocket.

Belongs to the shikimate kinase family. AroL subfamily. In terms of assembly, monomer. The cofactor is Mg(2+).

It localises to the cytoplasm. It catalyses the reaction shikimate + ATP = 3-phosphoshikimate + ADP + H(+). It participates in metabolic intermediate biosynthesis; chorismate biosynthesis; chorismate from D-erythrose 4-phosphate and phosphoenolpyruvate: step 5/7. In terms of biological role, catalyzes the specific phosphorylation of the 3-hydroxyl group of shikimic acid using ATP as a cosubstrate. In Shigella boydii serotype 4 (strain Sb227), this protein is Shikimate kinase 2.